We begin with the raw amino-acid sequence, 570 residues long: Apyrase (570 aa).

The first 23 residues, 1-23, serve as a signal peptide directing secretion; the sequence is MALVRFATIITVLCHLAIQDGAA. Residues Asp-43, His-45, and Asp-94 each contribute to the a divalent metal cation site. Asn-108 is a glycosylation site (N-linked (GlcNAc...) asparagine). A divalent metal cation-binding residues include Asn-126, His-229, and His-253. 2 N-linked (GlcNAc...) asparagine glycosylation sites follow: Asn-287 and Asn-326. Residue Arg-367 coordinates AMP. N-linked (GlcNAc...) asparagine glycosylation occurs at Asn-387. The AMP site is built by Arg-402 and Asp-507. N-linked (GlcNAc...) asparagine glycans are attached at residues Asn-552 and Asn-555.

The protein belongs to the 5'-nucleotidase family. As to quaternary structure, interacts with human PLAT; the interaction results in PLAT activation probably via an allosteric activation mechanism. It depends on a divalent metal cation as a cofactor. Saliva (at protein level). Salivary gland (at protein level). Not detected in midgut.

Its subcellular location is the secreted. The enzyme catalyses a ribonucleoside 5'-triphosphate + 2 H2O = a ribonucleoside 5'-phosphate + 2 phosphate + 2 H(+). In terms of biological role, cleaves adenosine triphosphate (ATP) and adenosine diphosphate (ADP) to adenosine monophosphate (AMP) and inorganic phosphate. Enhances fibrin degradation in the midgut blood bolus. Activates human tissue plasminogen activator (PLAT), probably via an allosteric activation mechanism. Inhibits ADP-mediated host platelet aggregation in vitro and in mosquito midgut. Inhibits host neutrophil activation in the mosquito midgut: reduces neutrophil extracellular traps formation in the presence of platelets and the formation of total cell- and mitochondrial-derived reactive oxygen species. (Microbial infection) Promotes Plasmodium berghei parasite transmission from the mammalian host to the mosquito probably by reducing the blood bolus viscosity. Facilitates sporozoite transmission from the mosquito to the mammalian host during blood feeding. The polypeptide is Apyrase (Anopheles gambiae (African malaria mosquito)).